The primary structure comprises 317 residues: Exopolysaccharide production protein ExoZ (317 aa).

7 consecutive transmembrane segments (helical) span residues 14-34 (TIGA…MWVI), 53-73 (IVPV…AGLF), 100-120 (IWPV…YAVF), 132-152 (LPVV…VAFD), 185-205 (LAVG…IGVL), 206-226 (GLPF…IGVL), and 268-288 (IGLG…LIGI).

This sequence belongs to the acyltransferase 3 family.

Its subcellular location is the cell membrane. In terms of biological role, required for the acetyl modification of the third sugar (glucose) of the octasaccharide subunit of succinoglycan (EPS I). The sequence is that of Exopolysaccharide production protein ExoZ (exoZ) from Rhizobium meliloti (strain 1021) (Ensifer meliloti).